Consider the following 281-residue polypeptide: Phosphatidylglycerol--prolipoprotein diacylglyceryl transferase (281 aa).

The next 3 helical transmembrane spans lie at 11–31 (IIFT…VISF), 57–77 (LLYS…IIFY), and 89–109 (VFYI…AIIV). Position 140 (R140) interacts with a 1,2-diacyl-sn-glycero-3-phospho-(1'-sn-glycerol). The next 3 helical transmembrane spans lie at 194 to 214 (PTQL…IYFF), 222 to 242 (GSIS…IEFF), and 255 to 275 (IITM…IIMY).

The protein belongs to the Lgt family.

The protein localises to the cell inner membrane. It carries out the reaction L-cysteinyl-[prolipoprotein] + a 1,2-diacyl-sn-glycero-3-phospho-(1'-sn-glycerol) = an S-1,2-diacyl-sn-glyceryl-L-cysteinyl-[prolipoprotein] + sn-glycerol 1-phosphate + H(+). It participates in protein modification; lipoprotein biosynthesis (diacylglyceryl transfer). Catalyzes the transfer of the diacylglyceryl group from phosphatidylglycerol to the sulfhydryl group of the N-terminal cysteine of a prolipoprotein, the first step in the formation of mature lipoproteins. In Buchnera aphidicola subsp. Acyrthosiphon pisum (strain APS) (Acyrthosiphon pisum symbiotic bacterium), this protein is Phosphatidylglycerol--prolipoprotein diacylglyceryl transferase.